Here is a 487-residue protein sequence, read N- to C-terminus: Protein SMG9 (487 aa).

Disordered regions lie at residues 30 to 83 (EDAA…PPAL) and 136 to 164 (RDKGSCSGGAGTAGTSAGAPNALQELQPP). Basic and acidic residues predominate over residues 42-70 (LKKDRDREQETWDRERDKDRKLERDREAE).

This sequence belongs to the SMG9 family.

In terms of biological role, involved in nonsense-mediated decay (NMD) of mRNAs containing premature stop codons. Probable component of kinase complex containing nonC and recruited to stalled ribosomes. The protein is Protein SMG9 of Drosophila melanogaster (Fruit fly).